The primary structure comprises 257 residues: Phosphate import ATP-binding protein PstB (257 aa).

The 242-residue stretch at 11-252 (IQVRDLNFYY…PAKKQTEDYI (242 aa)) folds into the ABC transporter domain. 43 to 50 (GPSGSGKS) serves as a coordination point for ATP.

The protein belongs to the ABC transporter superfamily. Phosphate importer (TC 3.A.1.7) family. As to quaternary structure, the complex is composed of two ATP-binding proteins (PstB), two transmembrane proteins (PstC and PstA) and a solute-binding protein (PstS).

It localises to the cell inner membrane. The catalysed reaction is phosphate(out) + ATP + H2O = ADP + 2 phosphate(in) + H(+). In terms of biological role, part of the ABC transporter complex PstSACB involved in phosphate import. Responsible for energy coupling to the transport system. The sequence is that of Phosphate import ATP-binding protein PstB from Salmonella choleraesuis (strain SC-B67).